A 75-amino-acid chain; its full sequence is Ferredoxin-thioredoxin reductase, variable chain (75 aa).

Positions 43-46 (QGRP) are interaction with ferredoxin.

Belongs to the ferredoxin thioredoxin reductase alpha subunit family. In terms of assembly, heterodimer of subunit A (variable subunit) and subunit B (catalytic subunit). Heterodimeric FTR forms a complex with ferredoxin and thioredoxin.

Its function is as follows. Variable subunit of the ferredoxin-thioredoxin reductase (FTR), which catalyzes the two-electron reduction of thioredoxins by the electrons provided by reduced ferredoxin. The polypeptide is Ferredoxin-thioredoxin reductase, variable chain (ftrV) (Synechocystis sp. (strain ATCC 27184 / PCC 6803 / Kazusa)).